The primary structure comprises 168 residues: Large ribosomal subunit protein bL17 (168 aa).

A disordered region spans residues 124-168; it reads QATGEAEAATKRAAKDAEGSAEVSEAKVDTTKADDEAAAEESKDA. Residues 131 to 168 show a composition bias toward basic and acidic residues; it reads AATKRAAKDAEGSAEVSEAKVDTTKADDEAAAEESKDA.

Belongs to the bacterial ribosomal protein bL17 family. As to quaternary structure, part of the 50S ribosomal subunit. Contacts protein L32.

This is Large ribosomal subunit protein bL17 from Streptomyces coelicolor (strain ATCC BAA-471 / A3(2) / M145).